Consider the following 257-residue polypeptide: 3-deoxy-manno-octulosonate cytidylyltransferase (257 aa).

This sequence belongs to the KdsB family.

The protein resides in the cytoplasm. The catalysed reaction is 3-deoxy-alpha-D-manno-oct-2-ulosonate + CTP = CMP-3-deoxy-beta-D-manno-octulosonate + diphosphate. The protein operates within nucleotide-sugar biosynthesis; CMP-3-deoxy-D-manno-octulosonate biosynthesis; CMP-3-deoxy-D-manno-octulosonate from 3-deoxy-D-manno-octulosonate and CTP: step 1/1. Its pathway is bacterial outer membrane biogenesis; lipopolysaccharide biosynthesis. Activates KDO (a required 8-carbon sugar) for incorporation into bacterial lipopolysaccharide in Gram-negative bacteria. This Halorhodospira halophila (strain DSM 244 / SL1) (Ectothiorhodospira halophila (strain DSM 244 / SL1)) protein is 3-deoxy-manno-octulosonate cytidylyltransferase.